The primary structure comprises 156 residues: Ribosomal RNA large subunit methyltransferase H (156 aa).

Residues Leu73, Gly104, and 123–128 (IGPLTL) contribute to the S-adenosyl-L-methionine site.

The protein belongs to the RNA methyltransferase RlmH family. As to quaternary structure, homodimer.

It is found in the cytoplasm. It catalyses the reaction pseudouridine(1915) in 23S rRNA + S-adenosyl-L-methionine = N(3)-methylpseudouridine(1915) in 23S rRNA + S-adenosyl-L-homocysteine + H(+). Specifically methylates the pseudouridine at position 1915 (m3Psi1915) in 23S rRNA. This is Ribosomal RNA large subunit methyltransferase H from Stenotrophomonas maltophilia (strain K279a).